Here is a 3122-residue protein sequence, read N- to C-terminus: Laminin subunit alpha-2 (3122 aa).

Positions 1 to 22 are cleaved as a signal peptide; it reads MPGAAGVLLLLLLSGGLGGVQA. Positions 35-286 constitute a Laminin N-terminal domain; that stretch reads QQRGLFPAVL…SVKDISVGGM (252 aa). 2 N-linked (GlcNAc...) asparagine glycosylation sites follow: asparagine 55 and asparagine 89. Intrachain disulfides connect cysteine 287–cysteine 296, cysteine 289–cysteine 307, cysteine 309–cysteine 318, cysteine 321–cysteine 341, cysteine 344–cysteine 353, and cysteine 346–cysteine 378. 4 Laminin EGF-like domains span residues 287–343, 344–413, 414–468, and 469–517; these read CICY…ECEA, CNCH…PCQP, CHCD…DCKA, and CNCS…GCDE. Asparagine 303 is a glycosylation site (N-linked (GlcNAc...) asparagine). Asparagine 363 and asparagine 380 each carry an N-linked (GlcNAc...) asparagine glycan. 10 cysteine pairs are disulfide-bonded: cysteine 381-cysteine 390, cysteine 393-cysteine 411, cysteine 414-cysteine 426, cysteine 416-cysteine 442, cysteine 444-cysteine 453, cysteine 456-cysteine 466, cysteine 469-cysteine 482, cysteine 471-cysteine 486, cysteine 488-cysteine 497, and cysteine 500-cysteine 515. Asparagine 470 is a glycosylation site (N-linked (GlcNAc...) asparagine). The Laminin EGF-like 5; first part domain occupies 518-527; sequence CFCSGVSNRC. The 193-residue stretch at 531-723 folds into the Laminin IV type A 1 domain; it reads YWTYGKIQDM…DGSIAAAVEV (193 aa). Residues 724-756 form the Laminin EGF-like 5; second part domain; that stretch reads CQCPPGYTGSSCESCWPRHRRVNGTIFGGICEP. Asparagine 746 is a glycosylation site (N-linked (GlcNAc...) asparagine). 32 disulfide bridges follow: cysteine 757–cysteine 766, cysteine 759–cysteine 773, cysteine 776–cysteine 785, cysteine 788–cysteine 804, cysteine 807–cysteine 822, cysteine 809–cysteine 832, cysteine 835–cysteine 844, cysteine 847–cysteine 862, cysteine 865–cysteine 879, cysteine 867–cysteine 886, cysteine 889–cysteine 898, cysteine 901–cysteine 915, cysteine 918–cysteine 930, cysteine 920–cysteine 937, cysteine 939–cysteine 948, cysteine 951–cysteine 964, cysteine 967–cysteine 979, cysteine 969–cysteine 985, cysteine 987–cysteine 996, cysteine 999–cysteine 1011, cysteine 1014–cysteine 1023, cysteine 1016–cysteine 1030, cysteine 1032–cysteine 1041, cysteine 1044–cysteine 1057, cysteine 1060–cysteine 1072, cysteine 1062–cysteine 1079, cysteine 1081–cysteine 1090, cysteine 1093–cysteine 1103, cysteine 1106–cysteine 1118, cysteine 1108–cysteine 1134, cysteine 1136–cysteine 1145, and cysteine 1148–cysteine 1163. Laminin EGF-like domains follow at residues 757–806, 807–864, 865–917, 918–966, 967–1013, 1014–1059, 1060–1105, and 1106–1165; these read CQCF…DCQP, CACP…SCQP, CQCN…NCQP, CRCN…GCVP, CNCN…GCTA, CECS…GCKA, CNCS…RCNL, and CDCF…GCSS. Asparagine 1061 is a glycosylation site (N-linked (GlcNAc...) asparagine). In terms of domain architecture, Laminin EGF-like 14; first part spans 1166 to 1175; sequence CYCFGTTTQC. A Laminin IV type A 2 domain is found at 1176 to 1379; the sequence is SEAKGLIRTW…MTPPADLIEK (204 aa). The Laminin EGF-like 14; second part domain maps to 1380–1419; the sequence is CDCPLGYSGLSCEACLPGFYRLRSQPGGRTPGPTLGTCVP. Intrachain disulfides connect cysteine 1420–cysteine 1429, cysteine 1422–cysteine 1436, cysteine 1439–cysteine 1448, cysteine 1451–cysteine 1466, cysteine 1469–cysteine 1484, cysteine 1471–cysteine 1494, cysteine 1497–cysteine 1506, cysteine 1509–cysteine 1524, cysteine 1527–cysteine 1539, cysteine 1529–cysteine 1546, cysteine 1548–cysteine 1557, and cysteine 1560–cysteine 1571. Laminin EGF-like domains follow at residues 1420-1468, 1469-1526, and 1527-1573; these read CQCN…DCQQ, CACP…SCQE, and CECD…ECVF. The interval 1574-2144 is domain II and I; it reads CGDECTGLLL…NQARKQANSI (571 aa). N-linked (GlcNAc...) asparagine glycans are attached at residues asparagine 1597, asparagine 1614, asparagine 1700, asparagine 1810, asparagine 1901, asparagine 1916, asparagine 1920, asparagine 2017, asparagine 2028, asparagine 2045, asparagine 2126, and asparagine 2240. The stretch at 1630 to 2150 forms a coiled coil; the sequence is ERLIQLAEGN…ANSIKVSVSS (521 aa). 5 Laminin G-like domains span residues 2145–2328, 2340–2521, 2526–2710, 2763–2934, and 2939–3110; these read KVSV…CKGC, TIQF…TKGC, VYTV…IGRC, SKQF…VGTC, and QRGT…KALE. An intrachain disulfide couples cysteine 2302 to cysteine 2328. N-linked (GlcNAc...) asparagine glycans are attached at residues asparagine 2360, asparagine 2435, and asparagine 2478. A disulfide bridge links cysteine 2495 with cysteine 2521. N-linked (GlcNAc...) asparagine glycosylation is found at asparagine 2551, asparagine 2558, and asparagine 2648. Cysteines 2683 and 2710 form a disulfide. N-linked (GlcNAc...) asparagine glycans are attached at residues asparagine 2868 and asparagine 2893. The cysteines at positions 2909 and 2934 are disulfide-linked. Positions 3043 to 3060 are enriched in polar residues; that stretch reads GNQVEAQSPNPASTSADT. The disordered stretch occupies residues 3043–3063; sequence GNQVEAQSPNPASTSADTNDP.

In terms of assembly, laminin is a complex glycoprotein, consisting of three different polypeptide chains (alpha, beta, gamma), which are bound to each other by disulfide bonds into a cross-shaped molecule comprising one long and three short arms with globules at each end. Alpha-2 is a subunit of laminin-2 (laminin-211 or merosin), laminin-4 (laminin-221 or S-merosin) and laminin-12 (laminin-213). Interacts with FBLN1, FBLN2 and NID2. In terms of tissue distribution, placenta, striated muscle, peripheral nerve, cardiac muscle, pancreas, lung, spleen, kidney, adrenal gland, skin, testis, meninges, choroid plexus, and some other regions of the brain; not in liver, thymus and bone.

The protein resides in the secreted. Its subcellular location is the extracellular space. It is found in the extracellular matrix. The protein localises to the basement membrane. Functionally, binding to cells via a high affinity receptor, laminin is thought to mediate the attachment, migration and organization of cells into tissues during embryonic development by interacting with other extracellular matrix components. This is Laminin subunit alpha-2 (LAMA2) from Homo sapiens (Human).